Consider the following 339-residue polypeptide: Phosphate acyltransferase (339 aa).

It belongs to the PlsX family. Homodimer. Probably interacts with PlsY.

The protein localises to the cytoplasm. It carries out the reaction a fatty acyl-[ACP] + phosphate = an acyl phosphate + holo-[ACP]. It participates in lipid metabolism; phospholipid metabolism. In terms of biological role, catalyzes the reversible formation of acyl-phosphate (acyl-PO(4)) from acyl-[acyl-carrier-protein] (acyl-ACP). This enzyme utilizes acyl-ACP as fatty acyl donor, but not acyl-CoA. The polypeptide is Phosphate acyltransferase (Dechloromonas aromatica (strain RCB)).